The sequence spans 248 residues: Coproheme decarboxylase (248 aa).

Residues Arg-130, Tyr-144–Lys-148, His-171, Gln-184, and Ser-222 contribute to the Fe-coproporphyrin III site. Tyr-144 is a catalytic residue.

This sequence belongs to the ChdC family. Type 1 subfamily. Requires Fe-coproporphyrin III as cofactor.

The catalysed reaction is Fe-coproporphyrin III + 2 H2O2 + 2 H(+) = heme b + 2 CO2 + 4 H2O. The enzyme catalyses Fe-coproporphyrin III + H2O2 + H(+) = harderoheme III + CO2 + 2 H2O. It catalyses the reaction harderoheme III + H2O2 + H(+) = heme b + CO2 + 2 H2O. The protein operates within porphyrin-containing compound metabolism; protoheme biosynthesis. In terms of biological role, involved in coproporphyrin-dependent heme b biosynthesis. Catalyzes the decarboxylation of Fe-coproporphyrin III (coproheme) to heme b (protoheme IX), the last step of the pathway. The reaction occurs in a stepwise manner with a three-propionate intermediate. This Geobacillus sp. (strain WCH70) protein is Coproheme decarboxylase.